A 213-amino-acid chain; its full sequence is tRNA (guanine-N(7)-)-methyltransferase (213 aa).

The S-adenosyl-L-methionine site is built by E44, E69, N96, and D118. D118 is an active-site residue. K122 contacts substrate. An interaction with RNA region spans residues 124–129; the sequence is RHEKRR. Substrate contacts are provided by residues D154 and 191 to 194; that span reads TEYE.

The protein belongs to the class I-like SAM-binding methyltransferase superfamily. TrmB family.

It catalyses the reaction guanosine(46) in tRNA + S-adenosyl-L-methionine = N(7)-methylguanosine(46) in tRNA + S-adenosyl-L-homocysteine. Its pathway is tRNA modification; N(7)-methylguanine-tRNA biosynthesis. Catalyzes the formation of N(7)-methylguanine at position 46 (m7G46) in tRNA. In Oceanobacillus iheyensis (strain DSM 14371 / CIP 107618 / JCM 11309 / KCTC 3954 / HTE831), this protein is tRNA (guanine-N(7)-)-methyltransferase.